The following is a 739-amino-acid chain: Adenosylcobalamin-dependent ribonucleoside-triphosphate reductase (739 aa).

Cysteines 119 and 419 form a disulfide. The tract at residues 147 to 158 (SMPFSFLFDELM) is effector region-1. Residues 168 to 313 (ARSNISQIPR…ICNLIGKAVV (146 aa)) are effector region-2. Residues cysteine 408 and glutamate 410 contribute to the active site. Residues 565 to 626 (FHYGAYLIQR…NPNFASAGTV (62 aa)) are adenosylcobalamin-binding-1. An adenosylcobalamin-binding-2 region spans residues 685–724 (LQQAPKEPIDKETYEKRSQEITGNVEEVFSQLNSDVKDLE).

The protein belongs to the class II ribonucleoside-triphosphate reductase family. As to quaternary structure, monomer. The cofactor is adenosylcob(III)alamin.

The catalysed reaction is a 2'-deoxyribonucleoside 5'-triphosphate + [thioredoxin]-disulfide + H2O = a ribonucleoside 5'-triphosphate + [thioredoxin]-dithiol. Its activity is regulated as follows. Allosterically regulated by ATP and dNTP. This is Adenosylcobalamin-dependent ribonucleoside-triphosphate reductase (rtpR) from Lactobacillus delbrueckii subsp. bulgaricus (strain ATCC 11842 / DSM 20081 / BCRC 10696 / JCM 1002 / NBRC 13953 / NCIMB 11778 / NCTC 12712 / WDCM 00102 / Lb 14).